We begin with the raw amino-acid sequence, 111 residues long: uncharacterized protein (111 aa).

A helical membrane pass occupies residues 64–86 (VLCWLVLPLYCCNLLNLFFNIFL).

The protein localises to the membrane. This is an uncharacterized protein from Saccharomyces cerevisiae (strain ATCC 204508 / S288c) (Baker's yeast).